The following is a 624-amino-acid chain: tRNA uridine 5-carboxymethylaminomethyl modification enzyme MnmG (624 aa).

Residues 13 to 18, valine 125, and serine 180 each bind FAD; that span reads GGGHAG. 273 to 287 serves as a coordination point for NAD(+); it reads GPRYCPSIEDKIVRF. Glutamine 370 is an FAD binding site.

The protein belongs to the MnmG family. In terms of assembly, homodimer. Heterotetramer of two MnmE and two MnmG subunits. FAD is required as a cofactor.

It is found in the cytoplasm. In terms of biological role, NAD-binding protein involved in the addition of a carboxymethylaminomethyl (cmnm) group at the wobble position (U34) of certain tRNAs, forming tRNA-cmnm(5)s(2)U34. The sequence is that of tRNA uridine 5-carboxymethylaminomethyl modification enzyme MnmG from Legionella pneumophila (strain Corby).